Reading from the N-terminus, the 216-residue chain is MTHLSKEAVIVRSALEAKGLETPMQHSSLSAQEKKQQIEQHMTSIMTLLGLDLADDSLAETPHRIAKMYVDEIFSGLDYGSFPKITLIENKMGTDEMIKVQDIGLTSTCEHHFVTIDGKATVAYIPKDKIIGLSKINRIVNFFAKRPQVQERLTQQILVALQVLLGTDNVAITVTATHYCVKSRGVMDASSQTTTTALGGVFKSSAATRHEFLSRA.

Residues cysteine 109, histidine 112, and cysteine 180 each coordinate Zn(2+).

Belongs to the GTP cyclohydrolase I family. In terms of assembly, homomer.

It carries out the reaction GTP + H2O = 7,8-dihydroneopterin 3'-triphosphate + formate + H(+). Its pathway is cofactor biosynthesis; 7,8-dihydroneopterin triphosphate biosynthesis; 7,8-dihydroneopterin triphosphate from GTP: step 1/1. The sequence is that of GTP cyclohydrolase 1 from Tolumonas auensis (strain DSM 9187 / NBRC 110442 / TA 4).